Reading from the N-terminus, the 220-residue chain is MKRHTEELDALYELCSREKMELTESQYELLAAYALLLEQWNKKINLISRKEDAPVVIKHVFHSLLMGLFHPFSAGEKVLDLGTGGGLPGIPLAIAWPETRFLLVDSTGKKIAACQAMIKELGISNAVALHSRVEELKGLTFDTVLSRQVAQLEQLCAYTYRFLKPEGCLICLKGGNLEEEIRTALDARHAHHGFPSTIEHFAISGFSPFFAEKEIVIAQR.

S-adenosyl-L-methionine-binding positions include Gly-82, Leu-87, 105–107, 133–134, and Arg-147; these read DST and VE.

It belongs to the methyltransferase superfamily. RNA methyltransferase RsmG family.

It is found in the cytoplasm. Functionally, specifically methylates the N7 position of a guanine in 16S rRNA. The chain is Ribosomal RNA small subunit methyltransferase G from Chlorobium limicola (strain DSM 245 / NBRC 103803 / 6330).